The chain runs to 346 residues: Hydroxyproline O-galactosyltransferase HPGT3 (346 aa).

Positions 1-10 (MESLPTTVPS) are enriched in polar residues. The segment at 1–21 (MESLPTTVPSKSERRARSSKF) is disordered. The Cytoplasmic portion of the chain corresponds to 1–28 (MESLPTTVPSKSERRARSSKFSQSSSKP). Residues 29-45 (SVIMAFFSCVAWLYVAG) form a helical; Signal-anchor for type II membrane protein membrane-spanning segment. Residues 46–346 (RLWQDAENRV…IRQDKVCSVA (301 aa)) are Lumenal-facing.

The protein belongs to the glycosyltransferase 31 family. It depends on Mn(2+) as a cofactor. In terms of tissue distribution, expressed in roots, rosette leaves, cauline leaves, stems, flowers and siliques.

It is found in the golgi apparatus membrane. It participates in protein modification; protein glycosylation. Possesses hydroxyproline O-galactosyltransferase activity. Transfers galactose from UDP-galactose to hydroxyproline residues in the arabinogalactan proteins (AGPs). Is specific for AGPs containing non-contiguous peptidyl hydroxyproline residues. The addition of galactose onto the peptidyl hydroxyproline residues in AGP core proteins represents the first committed step in arabinogalactan polysaccharide addition. AGP glycans play essential roles in both vegetative and reproductive plant growth. This chain is Hydroxyproline O-galactosyltransferase HPGT3, found in Arabidopsis thaliana (Mouse-ear cress).